We begin with the raw amino-acid sequence, 61 residues long: Small ribosomal subunit protein uS14 (61 aa).

Residues C24, C27, C40, and C43 each coordinate Zn(2+).

Belongs to the universal ribosomal protein uS14 family. Zinc-binding uS14 subfamily. In terms of assembly, part of the 30S ribosomal subunit. Contacts proteins S3 and S10. It depends on Zn(2+) as a cofactor.

Its function is as follows. Binds 16S rRNA, required for the assembly of 30S particles and may also be responsible for determining the conformation of the 16S rRNA at the A site. This is Small ribosomal subunit protein uS14 from Nitratidesulfovibrio vulgaris (strain ATCC 29579 / DSM 644 / CCUG 34227 / NCIMB 8303 / VKM B-1760 / Hildenborough) (Desulfovibrio vulgaris).